Reading from the N-terminus, the 565-residue chain is Fusion glycoprotein F0 (565 aa).

Positions 1-25 (MATYIQRVQCISALLSVVLTTLVSC) are cleaved as a signal peptide. At 26–500 (QIPRDRLSNI…VGRWYNSGAT (475 aa)) the chain is on the extracellular side. C70 and C199 are joined by a disulfide. N-linked (GlcNAc...) asparagine; by host glycosylation is present at N104. The tract at residues 117 to 141 (FFGAVIGTIALGVATSAQITAGIAL) is fusion peptide. The stretch at 142 to 170 (AEAREAKRDIALIKESMTKTHKSIELLQN) forms a coiled coil. N245 carries an N-linked (GlcNAc...) asparagine; by host glycan. The tract at residues 269 to 307 (IKGTVIDVDLERYMVTLSVKIPILSEVPGVLIHKASSIS) is leucine-zipper. Intrachain disulfides connect C338-C347, C362-C370, C394-C399, and C401-C424. Residue N449 is glycosylated (N-linked (GlcNAc...) asparagine; by host). Residues 466–491 (NLAAATDFLQDSRAELEKARKILSEV) are a coiled coil. Residues 501–521 (LITIIVVMIVVLVVIIVIVIV) form a helical membrane-spanning segment. At 522 to 565 (LYRLRRSMLMSNPAGRISRDTYTLEPKIRHMYTNGGFDAMTEKR) the chain is on the cytoplasmic side.

This sequence belongs to the paramyxoviruses fusion glycoprotein family. Homotrimer of disulfide-linked F1-F2. Interacts with HN and M proteins. In terms of processing, in natural infection, inactive F0 is matured into F1 and F2 outside the cell by one or more trypsin-like, arginine-specific endoprotease secreted by the bronchial epithelial cells. One identified protease that may be involved in this process is tryptase Clara. Unlike most paramyxoviruses, Sendai F0 processing occurs on the cell surface and induces a conformational change in the protein that unmasks the fusion peptide. F0 maturation is a primary determinant for organ tropism and pathogenicity. F1 and F2 display interchain and intrachain disulfide bonds, that are necessary for correct folding and intracellular transport. Post-translationally, N-glycosylated; glycans consist of a mixture of high mannose-type oligosaccharides and of complex-type oligosaccharides. Glycosylation at Asn-245 is essential for membrane localization and F0 cleavage.

Its subcellular location is the virion membrane. It is found in the host cell membrane. Its function is as follows. Class I viral fusion protein. Under the current model, the protein has at least 3 conformational states: pre-fusion native state, pre-hairpin intermediate state, and post-fusion hairpin state. During viral and plasma cell membrane fusion, the heptad repeat (HR) regions assume a trimer-of-hairpins structure, positioning the fusion peptide in close proximity to the C-terminal region of the ectodomain. The formation of this structure appears to drive apposition and subsequent fusion of viral and plasma cell membranes. Directs fusion of viral and cellular membranes leading to delivery of the nucleocapsid into the cytoplasm. This fusion is pH independent and occurs directly at the outer cell membrane. The trimer of F1-F2 (F protein) interacts with HN tetramer at the virion surface. Upon HN binding to its cellular receptor, the hydrophobic fusion peptide is unmasked and interacts with the cellular membrane, inducing the fusion between cell and virion membranes. Later in infection, F proteins expressed at the plasma membrane of infected cells could mediate fusion with adjacent cells to form syncytia, a cytopathic effect that could lead to tissue necrosis. The chain is Fusion glycoprotein F0 (F) from Sendai virus (strain Hamamatsu) (SeV).